A 143-amino-acid chain; its full sequence is FAM161 homolog famh-136 (143 aa).

This sequence belongs to the FAM136 family.

The protein resides in the cytoplasm. Functionally, may play a role in locomotion and behavior. The sequence is that of FAM161 homolog famh-136 from Caenorhabditis elegans.